The sequence spans 435 residues: Cell adhesion molecule 2 (435 aa).

Residues 1 to 24 form the signal peptide; sequence MIWKRSAVLRFYSVCGLLLQGSQG. The Extracellular portion of the chain corresponds to 25 to 367; that stretch reads QFPLTQNVTV…ALAGQNGPDH (343 aa). Residues 27 to 119 form the Ig-like V-type domain; the sequence is PLTQNVTVVE…PVKTSKAYLT (93 aa). N-linked (GlcNAc...) asparagine glycosylation is found at Asn31 and Asn51. Intrachain disulfides connect Cys44/Cys104, Cys146/Cys203, and Cys248/Cys296. 2 Ig-like C2-type domains span residues 127–219 and 227–312; these read PQIS…VAMQ and PSVK…YVLI. N-linked (GlcNAc...) asparagine glycosylation is present at Asn291. A helical transmembrane segment spans residues 368–388; that stretch reads ALIGGIVAVVVFVTLCSIFLL. The Cytoplasmic portion of the chain corresponds to 389-435; that stretch reads GRYLARHKGTYLTNEAKGAEDAPDADTAIINAEGSQVNAEEKKEYFI. The residue at position 423 (Ser423) is a Phosphoserine.

This sequence belongs to the nectin family.

The protein resides in the cell membrane. The protein localises to the synapse. Its subcellular location is the cell projection. It localises to the axon. Its function is as follows. Adhesion molecule that engages in homo- and heterophilic interactions with the other nectin-like family members, leading to cell aggregation. Important for synapse organization, providing regulated trans-synaptic adhesion. Preferentially binds to oligodendrocytes. In terms of biological role, (Microbial infection) Induces cell fusion in neuron infected by a neuropathogenic strain of measles. Interacts with measles hemagglutinin to trigger hyperfusogenic F-mediated membrane fusion and presumably transsynaptic cell-to-cell transmission of the virus. The chain is Cell adhesion molecule 2 (CADM2) from Homo sapiens (Human).